The chain runs to 274 residues: 2,3,4,5-tetrahydropyridine-2,6-dicarboxylate N-succinyltransferase (274 aa).

Residues Arg104 and Asp141 each contribute to the substrate site.

This sequence belongs to the transferase hexapeptide repeat family. In terms of assembly, homotrimer.

It is found in the cytoplasm. It carries out the reaction (S)-2,3,4,5-tetrahydrodipicolinate + succinyl-CoA + H2O = (S)-2-succinylamino-6-oxoheptanedioate + CoA. The protein operates within amino-acid biosynthesis; L-lysine biosynthesis via DAP pathway; LL-2,6-diaminopimelate from (S)-tetrahydrodipicolinate (succinylase route): step 1/3. This Enterobacter sp. (strain 638) protein is 2,3,4,5-tetrahydropyridine-2,6-dicarboxylate N-succinyltransferase.